Here is a 432-residue protein sequence, read N- to C-terminus: Adenosylhomocysteinase (432 aa).

The tract at residues 1 to 24 (MSAYSPLSAQLDADTDVDVESTRT) is disordered. Positions 137 and 162 each coordinate substrate. Position 163-165 (163-165 (TTT)) interacts with NAD(+). K192 and D196 together coordinate substrate. Residues N197, 226-231 (GYGYCG), E249, N284, 305-307 (AGH), and N352 each bind NAD(+).

It belongs to the adenosylhomocysteinase family. NAD(+) serves as cofactor.

The protein localises to the cytoplasm. The enzyme catalyses S-adenosyl-L-homocysteine + H2O = L-homocysteine + adenosine. It functions in the pathway amino-acid biosynthesis; L-homocysteine biosynthesis; L-homocysteine from S-adenosyl-L-homocysteine: step 1/1. May play a key role in the regulation of the intracellular concentration of adenosylhomocysteine. The polypeptide is Adenosylhomocysteinase (Haloquadratum walsbyi (strain DSM 16854 / JCM 12705 / C23)).